The primary structure comprises 388 residues: Succinyl-diaminopimelate desuccinylase (388 aa).

His-74 serves as a coordination point for Zn(2+). The active site involves Asp-76. Asp-107 lines the Zn(2+) pocket. Glu-142 acts as the Proton acceptor in catalysis. Zn(2+) contacts are provided by Glu-143, Glu-171, and His-360.

This sequence belongs to the peptidase M20A family. DapE subfamily. Homodimer. It depends on Zn(2+) as a cofactor. The cofactor is Co(2+).

The enzyme catalyses N-succinyl-(2S,6S)-2,6-diaminopimelate + H2O = (2S,6S)-2,6-diaminopimelate + succinate. It participates in amino-acid biosynthesis; L-lysine biosynthesis via DAP pathway; LL-2,6-diaminopimelate from (S)-tetrahydrodipicolinate (succinylase route): step 3/3. Catalyzes the hydrolysis of N-succinyl-L,L-diaminopimelic acid (SDAP), forming succinate and LL-2,6-diaminopimelate (DAP), an intermediate involved in the bacterial biosynthesis of lysine and meso-diaminopimelic acid, an essential component of bacterial cell walls. The polypeptide is Succinyl-diaminopimelate desuccinylase (Rhodopseudomonas palustris (strain BisB5)).